The chain runs to 863 residues: MNVQEQGFPLDLGASFTEDAPRPPVPGEEGELVSTDSRPVNHSFCSGKGTSIKSETSTATPRRSDLDLGYEPEGSASPTPPYLRWAESLHSLLDDQDGISLFRTFLKQEGCADLLDFWFACSGFRKLEPCDSNEEKRLKLARAIYRKYILDSNGIVSRQTKPATKSFIKDCVMKQQIDPAMFDQAQTEIQSTMEENTYPSFLKSDIYLEYTRTGSESPKVCSDQSSGSGTGKGMSGYLPTLNEDEEWKCDQDADEDDGRDPLPPSRLTQKLLLETAAPRAPSSRRYNEGRELRYGSWREPVNPYYVNSGYALAPATSANDSEQQSLSSDADTLSLTDSSVDGIPPYRIRKQHRREMQESIQVNGRVPLPHIPRTYRMPKEIRVEPQKFAEELIHRLEAVQRTREAEEKLEERLKRVRMEEEGEDGEMPSGPMASHKLPSVPAWHHFPPRYVDMGCSGLRDAHEENPESILDEHVQRVMRTPGCQSPGPGHRSPDSGHVAKTAVLGGTASGHGKHVPKLGLKLDTAGLHHHRHVHHHVHHNSARPKEQMEAEVARRVQSSFSWGPETHGHAKPRSYSENAGTTLSAGDLAFGGKTSAPSKRNTKKAESGKNANAEVPSTTEDAEKNQKIMQWIIEGEKEISRHRKAGHGSSGLRKQQAHESSRPLSIERPGAVHPWVSAQLRNSVQPSHLFIQDPTMPPNPAPNPLTQLEEARRRLEEEEKRANKLPSKQRYVQAVMQRGRTCVRPACAPVLSVVPAVSDLELSETETKSQRKAGGGSAPPCDSIVVAYYFCGEPIPYRTLVRGRAVTLGQFKELLTKKGSYRYYFKKVSDEFDCGVVFEEVREDEAVLPVFEEKIIGKVEKVD.

The interval 1-81 (MNVQEQGFPL…PEGSASPTPP (81 aa)) is disordered. Positions 20 to 29 (APRPPVPGEE) match the Tankyrase-binding motif motif. The span at 34–61 (STDSRPVNHSFCSGKGTSIKSETSTATP) shows a compositional bias: polar residues. At S75 the chain carries Phosphoserine. S77 carries the post-translational modification Phosphoserine; by CK1. The 124-residue stretch at 88 to 211 (SLHSLLDDQD…LKSDIYLEYT (124 aa)) folds into the RGS domain. The interaction with TP53 stretch occupies residues 209-338 (EYTRTGSESP…DADTLSLTDS (130 aa)). Disordered regions lie at residues 215–240 (SESPKVCSDQSSGSGTGKGMSGYLPT), 249–268 (CDQDADEDDGRDPLPPSRLT), and 315–344 (ATSANDSEQQSLSSDADTLSLTDSSVDGIP). S217 is subject to Phosphoserine. A compositionally biased stretch (acidic residues) spans 249 to 258 (CDQDADEDDG). The span at 325-339 (SLSSDADTLSLTDSS) shows a compositional bias: low complexity. The segment at 348-432 (IRKQHRREMQ…EDGEMPSGPM (85 aa)) is interaction with GSK3B. The segment at 353 to 411 (RREMQESIQVNGRVPLPHIPRTYRMPKEIRVEPQKFAEELIHRLEAVQRTREAEEKLEE) is interaction with SIAH1. Positions 433–501 (ASHKLPSVPA…SPDSGHVAKT (69 aa)) are interaction with beta-catenin. At S468 the chain carries Phosphoserine; by CK1. Phosphothreonine; by GSK3-beta is present on T480. S485 carries the phosphoserine; by GSK3-beta modification. S492 and S509 each carry phosphoserine. The tract at residues 505–758 (GGTASGHGKH…PVLSVVPAVS (254 aa)) is interaction with RNF111. Basic residues predominate over residues 529 to 542 (HHRHVHHHVHHNSA). 2 disordered regions span residues 529–624 (HHRH…DAEK) and 642–664 (HRKAGHGSSGLRKQQAHESSRPL). A compositionally biased stretch (basic and acidic residues) spans 543 to 554 (RPKEQMEAEVAR). The interval 572–790 (PRSYSENAGT…CDSIVVAYYF (219 aa)) is interaction with PPP2CA. Residues 575–584 (YSENAGTTLS) are compositionally biased toward polar residues. The tract at residues 678–753 (AQLRNSVQPS…RPACAPVLSV (76 aa)) is interaction with HIPK2. Residues 781–863 (CDSIVVAYYF…KIIGKVEKVD (83 aa)) enclose the DIX domain. Residues K858 and K861 each participate in a glycyl lysine isopeptide (Lys-Gly) (interchain with G-Cter in SUMO) cross-link.

In terms of assembly, homodimer. Component of the beta-catenin destruction complex, containing at least CTNNB1, an axin and GSK3B, that regulates CTNNB1 protein levels through phosphorylation and ubiquitination. Interacts with GSK3B; the interaction hyperphosphorylates CTNNB1 leading to its ubiquitination and destruction. Interacts with DAXX; the interaction stimulates the interaction of DAXX with TP53, stimulates 'Ser-46' phosphorylation of TP53 and induces cell death on UV irradiation. Also interacts with APC, RNF111, SMAD6 and SMAD7. Interacts (via the C-terminal) with PPP1CA; the interaction dephosphorylates AXIN1 and regulates interaction with GSK3B. Interacts with PPP2CA; the interaction dephosphorylates AXIN1. Interacts with MDFI; the interaction decreases AXIN1-mediated JUN N-terminal kinase (JNK) activation. Interacts with MDFIC; the interaction inhibits beta-cateninin-mediated signaling and AXIN1-mediated JUN N-terminal kinase (JNK) activation. Binds ANKRD6, PIAS1, PIAS2, PIAS4, SUMO1, MAP3K1 and MAP3K4. Component of the AXIN1-HIPK2-TP53 complex. Interacts directly in the complex with TP53 and HIPK2. Interacts with DIXDC1; the interaction prevents interaction with MAP3K1. Interacts with AIDA; the interaction blocks the AXIN1-mediated JNK activation through disrupting AXIN1 homodimerization and Wnt signaling. Interacts with LRP5 (via its phosphorylated PPPSP motifs); the interaction is stimulated by WNT1 and GSK3B and activates beta-catenin signaling. Interacts with CTNNB1 (via the armadillo repeats 2-7). Interacts with MACF1. Found in a complex composed of MACF1, APC, AXIN1, CTNNB1 and GSK3B. Interacts with TNKS. Interacts with DAB2; the interaction is mutually exclusive with the AXIN1:PPP1CA interaction. Interacts with ZBED3 (via PPPSP motif); the interaction is direct, enhanced by protein kinase GSK3B and casein kinase CSNK1E activities and decreases GSK3B-induced beta-catenin serine and threonine phosphorylations. Interacts with WDR26. Interacts with GID8. Interacts with SIAH1 and SIAH2; both probably catalyze AXIN1 ubiquitination and subsequent proteasome-mediated ubiquitin-dependent degradation. Interaction with GSK3B and AXIN1 is competitive. Post-translationally, phosphorylation and dephosphorylation of AXIN1 regulates assembly and function of the beta-catenin complex. Phosphorylated by CK1 and GSK3B. Dephosphorylated by PPP1CA and PPP2CA. Phosphorylation by CK1 enhances binding of GSK3B to AXIN1. Also phosphorylated by CDK2 which regulates interaction with CTNBB1. In terms of processing, ADP-ribosylated by tankyrase TNKS and TNKS2. Poly-ADP-ribosylated protein is recognized by RNF146, followed by ubiquitination and subsequent activation of the Wnt signaling pathway. Ubiquitinated by RNF146 when poly-ADP-ribosylated, leading to its degradation and subsequent activation of the Wnt signaling pathway. Deubiquitinated by USP34, deubiquitinated downstream of beta-catenin stabilization step: deubiquitination is important for nuclear accumulation during Wnt signaling to positively regulate beta-catenin (CTNBB1)-mediated transcription. Sumoylation at Lys-858 and Lys-861 prevents ubiquitination and degradation. Sumoylation is required for AXIN1-mediated JNK activation. Ubiquitination by SIAH1 and SIAH2 induces its proteasomal degradation as part of the activation of the Wnt signaling pathway. In terms of tissue distribution, expressed in embryonic stem cells.

It is found in the cytoplasm. The protein localises to the nucleus. It localises to the cell membrane. The protein resides in the membrane. Functionally, component of the beta-catenin destruction complex required for regulating CTNNB1 levels through phosphorylation and ubiquitination, and modulating Wnt-signaling. Controls dorsoventral patterning via two opposing effects; down-regulates CTNNB1 to inhibit the Wnt signaling pathway and ventralize embryos, but also dorsalizes embryos by activating a Wnt-independent JNK signaling pathway. In Wnt signaling, probably facilitates the phosphorylation of CTNNB1 and APC by GSK3B. Likely to function as a tumor suppressor. Facilitates the phosphorylation of TP53 by HIPK2 upon ultraviolet irradiation. Enhances TGF-beta signaling by recruiting the RNF111 E3 ubiquitin ligase and promoting the degradation of inhibitory SMAD7. Also a component of the AXIN1-HIPK2-TP53 complex which controls cell growth, apoptosis and development. This is Axin-1 (Axin1) from Mus musculus (Mouse).